A 245-amino-acid polypeptide reads, in one-letter code: MSQTEPLDQDPVFQLKGSMLAITVLELARNDLDALDRQLAAKVALAPNFFNNAPLVLALDKLPAGQGVIDLPGLMRVCRSHGLRTLAIRASRIEDIAAAIAIELPVLPPSGARERPLEPLVGEEKKKPEKPPEPTIKPTKIITSPVRGGQQIYAQGGDLVVISSVSPGAELLADGNIHVYGPMRGRALAGIKGDTKARIFCQQLTAELVSIAGQYKVSEDLRRDPLWGASVQVNLSGDVLNIIRL.

Basic and acidic residues predominate over residues 113 to 132 (RERPLEPLVGEEKKKPEKPP). Positions 113-138 (RERPLEPLVGEEKKKPEKPPEPTIKP) are disordered.

Belongs to the MinC family. In terms of assembly, interacts with MinD and FtsZ.

Cell division inhibitor that blocks the formation of polar Z ring septums. Rapidly oscillates between the poles of the cell to destabilize FtsZ filaments that have formed before they mature into polar Z rings. Prevents FtsZ polymerization. The polypeptide is Probable septum site-determining protein MinC (Pseudomonas fluorescens (strain SBW25)).